Reading from the N-terminus, the 367-residue chain is Glutamate 5-kinase (367 aa).

Residue lysine 9 coordinates ATP. Substrate is bound by residues serine 49, aspartate 136, and asparagine 148. ATP is bound by residues threonine 168–aspartate 169 and threonine 210–lysine 216. Positions serine 276–arginine 350 constitute a PUA domain.

This sequence belongs to the glutamate 5-kinase family.

It is found in the cytoplasm. It carries out the reaction L-glutamate + ATP = L-glutamyl 5-phosphate + ADP. The protein operates within amino-acid biosynthesis; L-proline biosynthesis; L-glutamate 5-semialdehyde from L-glutamate: step 1/2. Its function is as follows. Catalyzes the transfer of a phosphate group to glutamate to form L-glutamate 5-phosphate. In Bacillus anthracis, this protein is Glutamate 5-kinase.